Consider the following 215-residue polypeptide: MRIILLGAPGTGKGTQGKFITEKYKIPQISTGDMLRESVVLKNKIGMIIKNIIEEGKLVSDEIVCHLIKNRIKKHDCINGFILDGFPRTIQQALYLSKKNIKIDYVLEFIIPHEYILERISGRRIHIQSGRIYHVKFKPPKIKDKDDLTGQTLITRKDDTKEGIKKRLEEYKKVHDPLVQYYIHEKKRGNIKFFQIDAMLSFSSIRKKLETILKK.

10–15 contributes to the ATP binding site; the sequence is GTGKGT. The segment at 30–59 is NMP; that stretch reads STGDMLRESVVLKNKIGMIIKNIIEEGKLV. AMP-binding positions include Thr-31, Arg-36, 57 to 59, 85 to 88, and Gln-92; these read KLV and GFPR. An LID region spans residues 122–159; it reads GRRIHIQSGRIYHVKFKPPKIKDKDDLTGQTLITRKDD. ATP contacts are provided by residues Arg-123 and 132–133; that span reads IY. Arg-156 and Arg-167 together coordinate AMP. Leu-200 provides a ligand contact to ATP.

Belongs to the adenylate kinase family. Monomer.

The protein localises to the cytoplasm. The enzyme catalyses AMP + ATP = 2 ADP. It functions in the pathway purine metabolism; AMP biosynthesis via salvage pathway; AMP from ADP: step 1/1. In terms of biological role, catalyzes the reversible transfer of the terminal phosphate group between ATP and AMP. Plays an important role in cellular energy homeostasis and in adenine nucleotide metabolism. This chain is Adenylate kinase, found in Buchnera aphidicola subsp. Acyrthosiphon pisum (strain 5A).